Consider the following 143-residue polypeptide: Large ribosomal subunit protein uL11 (143 aa).

This sequence belongs to the universal ribosomal protein uL11 family. In terms of assembly, part of the ribosomal stalk of the 50S ribosomal subunit. Interacts with L10 and the large rRNA to form the base of the stalk. L10 forms an elongated spine to which L12 dimers bind in a sequential fashion forming a multimeric L10(L12)X complex. In terms of processing, one or more lysine residues are methylated.

Functionally, forms part of the ribosomal stalk which helps the ribosome interact with GTP-bound translation factors. The polypeptide is Large ribosomal subunit protein uL11 (Albidiferax ferrireducens (strain ATCC BAA-621 / DSM 15236 / T118) (Rhodoferax ferrireducens)).